The primary structure comprises 200 residues: Pyridoxal 5'-phosphate synthase subunit PdxT (200 aa).

Residue 46 to 48 coordinates L-glutamine; that stretch reads GES. The active-site Nucleophile is C78. L-glutamine is bound by residues R107 and 138–139; that span reads IR. Catalysis depends on charge relay system residues H175 and E177.

This sequence belongs to the glutaminase PdxT/SNO family. As to quaternary structure, in the presence of PdxS, forms a dodecamer of heterodimers. Only shows activity in the heterodimer.

The catalysed reaction is aldehydo-D-ribose 5-phosphate + D-glyceraldehyde 3-phosphate + L-glutamine = pyridoxal 5'-phosphate + L-glutamate + phosphate + 3 H2O + H(+). It carries out the reaction L-glutamine + H2O = L-glutamate + NH4(+). It functions in the pathway cofactor biosynthesis; pyridoxal 5'-phosphate biosynthesis. In terms of biological role, catalyzes the hydrolysis of glutamine to glutamate and ammonia as part of the biosynthesis of pyridoxal 5'-phosphate. The resulting ammonia molecule is channeled to the active site of PdxS. The chain is Pyridoxal 5'-phosphate synthase subunit PdxT from Corynebacterium glutamicum (strain R).